Here is a 157-residue protein sequence, read N- to C-terminus: Large ribosomal subunit protein uL15 (157 aa).

The protein belongs to the universal ribosomal protein uL15 family. Part of the 50S ribosomal subunit.

In terms of biological role, binds to the 23S rRNA. This chain is Large ribosomal subunit protein uL15, found in Ehrlichia ruminantium (strain Gardel).